A 337-amino-acid chain; its full sequence is Phosphate acyltransferase (337 aa).

The protein belongs to the PlsX family. As to quaternary structure, homodimer. Probably interacts with PlsY.

The protein resides in the cytoplasm. It carries out the reaction a fatty acyl-[ACP] + phosphate = an acyl phosphate + holo-[ACP]. It functions in the pathway lipid metabolism; phospholipid metabolism. In terms of biological role, catalyzes the reversible formation of acyl-phosphate (acyl-PO(4)) from acyl-[acyl-carrier-protein] (acyl-ACP). This enzyme utilizes acyl-ACP as fatty acyl donor, but not acyl-CoA. The sequence is that of Phosphate acyltransferase from Listeria innocua serovar 6a (strain ATCC BAA-680 / CLIP 11262).